The chain runs to 367 residues: DNA replication and repair protein RecF (367 aa).

An ATP-binding site is contributed by 30-37 (GANGSGKT).

This sequence belongs to the RecF family.

It is found in the cytoplasm. In terms of biological role, the RecF protein is involved in DNA metabolism; it is required for DNA replication and normal SOS inducibility. RecF binds preferentially to single-stranded, linear DNA. It also seems to bind ATP. This Pseudomonas syringae pv. syringae (strain B728a) protein is DNA replication and repair protein RecF.